The following is a 534-amino-acid chain: Flavonoid-6-hydroxylase (534 aa).

A helical membrane pass occupies residues 3–23 (FISFVYTLIAFSSLLYFYLIW). Cysteine 467 contacts heme.

This sequence belongs to the cytochrome P450 family. The cofactor is heme. As to expression, expressed in leaves.

Its subcellular location is the membrane. The enzyme catalyses genkwanin + reduced [NADPH--hemoprotein reductase] + O2 = scutellarein 7-methyl ether + oxidized [NADPH--hemoprotein reductase] + H2O. It catalyses the reaction (2S)-sakuranetin + reduced [NADPH--hemoprotein reductase] + O2 = (2S)-7-methylcarthamidin + oxidized [NADPH--hemoprotein reductase] + H2O + H(+). The catalysed reaction is apigenin 4',7-dimethyl ether + reduced [NADPH--hemoprotein reductase] + O2 = ladanein + oxidized [NADPH--hemoprotein reductase] + H2O + H(+). It carries out the reaction (2S)-naringenin 4',7-dimethyl ether + reduced [NADPH--hemoprotein reductase] + O2 = (2S)-carthamidin-4',7-dimethyl ether + oxidized [NADPH--hemoprotein reductase] + H2O + H(+). It functions in the pathway flavonoid metabolism. Functionally, hydroxylase involved in the biosynthesis of polymethoxylated flavonoids natural products such as nevadensin and salvigenin, aroma compounds which contribute to the flavor of sweet basil, and exhibit pharmacological activities such as anti-allergic, anti-oxidant, antibacterial, anti-proliferative, and anti-inflammatory effects. Catalyzes the 6-hydroxylation of 7-O-methylated precursors such as the conversion of genkwanin (GENK) to scutellarein-7-methyl ether (SCU7Me). Can also use, with a lower efficiency, apigenin-7,4'-dimethyl ether (AdM), naringenin-7-methyl ether (SAK) and naringenin-7,4'-dimethyl ether (NdM) as substrates. The protein is Flavonoid-6-hydroxylase of Ocimum basilicum (Sweet basil).